The following is a 535-amino-acid chain: EH domain-containing protein 3 (535 aa).

An N-acetylmethionine modification is found at methionine 1. One can recognise a Dynamin-type G domain in the interval 55–286; that stretch reads FDNKPMVLLV…DLFRDIQSLP (232 aa). Positions 65 to 72 are G1 motif; the sequence is GQYSTGKT. 65-72 serves as a coordination point for ATP; it reads GQYSTGKT. The segment at 91 to 92 is G2 motif; sequence EP. Residues 153-156 are G3 motif; sequence DTPG. Residues 198-227 adopt a coiled-coil conformation; that stretch reads DEFSEVIKALKNHEDKMRVVLNKADQIETQ. Residues 219–222 are G4 motif; sequence NKAD. Residue lysine 220 coordinates ATP. A region of interest (G5 motif) is located at residue isoleucine 243. Position 258 (tryptophan 258) interacts with ATP. Lysine 315 is covalently cross-linked (Glycyl lysine isopeptide (Lys-Gly) (interchain with G-Cter in SUMO)). Residues serine 349 and serine 456 each carry the phosphoserine modification. The EH domain occupies 444-532; that stretch reads DKPMYDEIFY…AHLLPPSKRK (89 aa). In terms of domain architecture, EF-hand spans 476–511; that stretch reads LPNSVLGKIWKLADIDKDGMLDDDEFALANHLIKVK. Residues aspartate 489, aspartate 491, aspartate 493, methionine 495, and glutamate 500 each contribute to the Ca(2+) site. Residue lysine 511 forms a Glycyl lysine isopeptide (Lys-Gly) (interchain with G-Cter in SUMO) linkage.

It belongs to the TRAFAC class dynamin-like GTPase superfamily. Dynamin/Fzo/YdjA family. EHD subfamily. Homooligomer, and heterooligomer with EHD1, EHD2 and EHD4, ATP-binding is required for heterooligomerization. Interacts with PACSIN1. Interacts with PACSIN2. Interacts (via EH domain) with MICALL1. Interacts (via EH domain) with RAB11FIP2. Interacts with ANK2. Highly expressed in heart and brain and moderately expressed in kidney, liver, and placenta.

It is found in the recycling endosome membrane. Its subcellular location is the cell membrane. The protein localises to the cell projection. It localises to the cilium membrane. Its function is as follows. ATP- and membrane-binding protein that controls membrane reorganization/tubulation upon ATP hydrolysis. In vitro causes tubulation of endocytic membranes. Binding to phosphatidic acid induces its membrane tubulation activity. Plays a role in endocytic transport. Involved in early endosome to recycling endosome compartment (ERC), retrograde early endosome to Golgi, and endosome to plasma membrane (rapid recycling) protein transport. Involved in the regulation of Golgi maintenance and morphology. Involved in the recycling of internalized D1 dopamine receptor. Plays a role in cardiac protein trafficking probably implicating ANK2. Involved in the ventricular membrane targeting of SLC8A1 and CACNA1C and probably the atrial membrane localization of CACNA1GG and CACNA1H implicated in the regulation of atrial myocyte excitability and cardiac conduction. In conjunction with EHD4 may be involved in endocytic trafficking of KDR/VEGFR2 implicated in control of glomerular function. Involved in the rapid recycling of integrin beta-3 implicated in cell adhesion maintenance. Involved in the unidirectional retrograde dendritic transport of endocytosed BACE1 and in efficient sorting of BACE1 to axons implicating a function in neuronal APP processing. Plays a role in the formation of the ciliary vesicle, an early step in cilium biogenesis; possibly sharing redundant functions with EHD1. This is EH domain-containing protein 3 from Homo sapiens (Human).